A 680-amino-acid chain; its full sequence is DNA-directed RNA polymerase subunit beta' (680 aa).

Residues Cys69, Cys71, Cys87, and Cys90 each coordinate Zn(2+). 3 residues coordinate Mg(2+): Asp489, Asp491, and Asp493.

The protein belongs to the RNA polymerase beta' chain family. RpoC1 subfamily. In terms of assembly, in plastids the minimal PEP RNA polymerase catalytic core is composed of four subunits: alpha, beta, beta', and beta''. When a (nuclear-encoded) sigma factor is associated with the core the holoenzyme is formed, which can initiate transcription. Requires Mg(2+) as cofactor. Zn(2+) serves as cofactor.

The protein localises to the plastid. Its subcellular location is the chloroplast. The catalysed reaction is RNA(n) + a ribonucleoside 5'-triphosphate = RNA(n+1) + diphosphate. Functionally, DNA-dependent RNA polymerase catalyzes the transcription of DNA into RNA using the four ribonucleoside triphosphates as substrates. The chain is DNA-directed RNA polymerase subunit beta' from Nandina domestica (Heavenly bamboo).